Reading from the N-terminus, the 78-residue chain is Delta-conotoxin-like S6.8 (78 aa).

A signal peptide spans 1 to 22; it reads MKLTCMMIVAVLFLTAWTFVTA. The propeptide occupies 23-53; sequence DDSRNGLKNLFPKARHEMKNPDASKLNKRDG. Cystine bridges form between cysteine 54–cysteine 69, cysteine 61–cysteine 73, and cysteine 68–cysteine 77.

Belongs to the conotoxin O1 superfamily. Expressed by the venom duct.

It localises to the secreted. Its function is as follows. Delta-conotoxins bind to site 6 of voltage-gated sodium channels (Nav) and inhibit the inactivation process. In Conus striatus (Striated cone), this protein is Delta-conotoxin-like S6.8.